Consider the following 340-residue polypeptide: Putative phosphatidylcholine:ceramide cholinephosphotransferase 3 (340 aa).

Residues 1-25 (MGSVSKTVISARGASPDDEQNGTKN) form a disordered region. 4 consecutive transmembrane segments (helical) span residues 36 to 56 (CIFL…VLAY), 81 to 101 (SSLG…LLVI), 178 to 198 (LLFS…AYYL), and 202 to 222 (IKPL…CMTI). The active site involves His183. At 223-340 (SRTHYTIDVV…SSSSTYPLPC (118 aa)) the chain is on the cytoplasmic side. Active-site residues include His226 and Asp230. A disordered region spans residues 294-313 (STPRGQERGGASAESSDSSV).

Belongs to the sphingomyelin synthase family.

It localises to the membrane. The enzyme catalyses an N-acyl-sphingoid base + a 1,2-diacyl-sn-glycero-3-phosphocholine = an N-(acyl)-sphingosylphosphocholine + a 1,2-diacyl-sn-glycerol. The catalysed reaction is an N-acylsphing-4-enine + a 1,2-diacyl-sn-glycero-3-phosphocholine = a sphingomyelin + a 1,2-diacyl-sn-glycerol. It catalyses the reaction an N-acyl-15-methylhexadecasphing-4-enine + a 1,2-diacyl-sn-glycero-3-phosphocholine = an N-acyl-15-methylhexadecasphing-4-enine-1-phosphocholine + a 1,2-diacyl-sn-glycerol. It participates in lipid metabolism; sphingolipid metabolism. Its function is as follows. Bidirectional lipid cholinephosphotransferase capable of converting phosphatidylcholine (PC) and ceramide to sphingomyelin (SM) and diacylglycerol (DAG) and vice versa. Direction is dependent on the relative concentrations of DAG and ceramide as phosphocholine acceptors. Directly and specifically recognizes the choline head group on the substrate. Also requires two fatty chains on the choline-P donor molecule in order to be recognized efficiently as a substrate. Does not function strictly as a SM synthase. C.elegans contains specific sphingoid bases, which are unique or different in structure compared to the sphingoid bases found in other animals. Two examples of these distinctive compounds are: 15-methylhexadecasphinganine and 15-methylhexadecasphing-4-enine. This chain is Putative phosphatidylcholine:ceramide cholinephosphotransferase 3 (sms-3), found in Caenorhabditis elegans.